Here is a 1082-residue protein sequence, read N- to C-terminus: Protein argonaute 1A (1082 aa).

Disordered regions lie at residues 17–148 (MMRK…ASQD) and 187–208 (GQSP…VRFP). Residues 29-38 (GESSGTQQAT) are compositionally biased toward polar residues. Gly residues predominate over residues 72–100 (GRGGGQHQGRGGRYQGRGGPTSHQPGGGP). Positions 420–533 (PVIDFVAQLL…LPMEVCKIVE (114 aa)) constitute a PAZ domain. A Piwi domain is found at 709–1030 (LLIAILPDNN…AAFRARFYME (322 aa)). The segment at 1036–1065 (SGSMASGAHTRGGGPLPGARSTKPAGNVAV) is disordered.

This sequence belongs to the argonaute family. Ago subfamily.

Probably involved in the RNA silencing pathway. May bind to short RNAs such as microRNAs (miRNAs) or short interfering RNAs (siRNAs), and represses the translation of mRNAs which are complementary to them. The protein is Protein argonaute 1A (AGO1A) of Oryza sativa subsp. japonica (Rice).